The chain runs to 171 residues: Peptide deformylase (171 aa).

Residues C92 and H134 each coordinate Fe cation. E135 is a catalytic residue. H138 lines the Fe cation pocket.

This sequence belongs to the polypeptide deformylase family. Requires Fe(2+) as cofactor.

The enzyme catalyses N-terminal N-formyl-L-methionyl-[peptide] + H2O = N-terminal L-methionyl-[peptide] + formate. Its function is as follows. Removes the formyl group from the N-terminal Met of newly synthesized proteins. Requires at least a dipeptide for an efficient rate of reaction. N-terminal L-methionine is a prerequisite for activity but the enzyme has broad specificity at other positions. The sequence is that of Peptide deformylase from Polynucleobacter necessarius subsp. necessarius (strain STIR1).